Consider the following 209-residue polypeptide: Large ribosomal subunit protein uL3 (209 aa).

A disordered region spans residues 130 to 154 (RGPMSHGSKFHRAVGSMGASSDPSR).

Belongs to the universal ribosomal protein uL3 family. Part of the 50S ribosomal subunit. Forms a cluster with proteins L14 and L19.

In terms of biological role, one of the primary rRNA binding proteins, it binds directly near the 3'-end of the 23S rRNA, where it nucleates assembly of the 50S subunit. The protein is Large ribosomal subunit protein uL3 of Clostridium kluyveri (strain NBRC 12016).